Reading from the N-terminus, the 297-residue chain is Protein-methionine-sulfoxide reductase catalytic subunit MsrP (297 aa).

Positions 1 to 35 form a signal peptide, tat-type signal; sequence MLITPEKLYKQRRNFLKLGAGALISSSVLASKLSA. Residues 62–63, C116, T151, N201, R206, and 217–219 each bind Mo-molybdopterin; these read YE and SIK.

The protein belongs to the MsrP family. In terms of assembly, heterodimer of a catalytic subunit (MsrP) and a heme-binding subunit (MsrQ). Mo-molybdopterin is required as a cofactor. In terms of processing, predicted to be exported by the Tat system. The position of the signal peptide cleavage has not been experimentally proven.

Its subcellular location is the periplasm. The catalysed reaction is L-methionyl-[protein] + a quinone + H2O = L-methionyl-(S)-S-oxide-[protein] + a quinol. The enzyme catalyses L-methionyl-[protein] + a quinone + H2O = L-methionyl-(R)-S-oxide-[protein] + a quinol. Its function is as follows. Part of the MsrPQ system that repairs oxidized periplasmic proteins containing methionine sulfoxide residues (Met-O), using respiratory chain electrons. Thus protects these proteins from oxidative-stress damage caused by reactive species of oxygen and chlorine generated by the host defense mechanisms. MsrPQ is essential for the maintenance of envelope integrity under bleach stress, rescuing a wide series of structurally unrelated periplasmic proteins from methionine oxidation. The catalytic subunit MsrP is non-stereospecific, being able to reduce both (R-) and (S-) diastereoisomers of methionine sulfoxide. This chain is Protein-methionine-sulfoxide reductase catalytic subunit MsrP, found in Campylobacter jejuni subsp. jejuni serotype O:2 (strain ATCC 700819 / NCTC 11168).